We begin with the raw amino-acid sequence, 398 residues long: Acetate kinase (398 aa).

Asn7 is a binding site for Mg(2+). Residue Lys14 coordinates ATP. Arg91 contacts substrate. Asp148 (proton donor/acceptor) is an active-site residue. ATP-binding positions include 208–212 (HLGNG), 283–285 (DFR), and 331–335 (GLGEN). Glu384 is a Mg(2+) binding site.

This sequence belongs to the acetokinase family. Homodimer. The cofactor is Mg(2+). Requires Mn(2+) as cofactor.

It is found in the cytoplasm. The enzyme catalyses acetate + ATP = acetyl phosphate + ADP. It functions in the pathway metabolic intermediate biosynthesis; acetyl-CoA biosynthesis; acetyl-CoA from acetate: step 1/2. Its function is as follows. Catalyzes the formation of acetyl phosphate from acetate and ATP. Can also catalyze the reverse reaction. The chain is Acetate kinase from Natranaerobius thermophilus (strain ATCC BAA-1301 / DSM 18059 / JW/NM-WN-LF).